Consider the following 591-residue polypeptide: Homeobox domain-containing transcription factor HOB1 (591 aa).

The segment covering 1–15 (MEGKNEDMHTPRGPE) has biased composition (basic and acidic residues). Disordered regions lie at residues 1 to 37 (MEGK…DMLG) and 148 to 168 (IAGP…RSPA). Positions 176–223 (IAILRESYARNPNPDRKELERLAARTGRPWNKIREYFRQRRNKLRGLE) form a DNA-binding region, homeobox. 2 disordered regions span residues 420 to 463 (DAGL…PRES) and 543 to 563 (DAIE…ALTE). The span at 427–441 (QGEEDQPPTVEESDQ) shows a compositional bias: acidic residues. Residues 543-560 (DAIERRNAGESKRKRDDA) show a composition bias toward basic and acidic residues.

The protein localises to the nucleus. Functionally, general stress-responsive transcription factor that governs multiple stress responses and adaptations. Plays a key role in virulence. Mediates the expression of LAC1, which is the major laccase involved in melanin synthesis. Positively regulates BZP4 induction under conditions of nutrient starvation and basal expression levels of MBS1 and USV101, 3 major transcription factors that independently contribute to melanin production. Also acts as a key regulator of ergosterol gene expression. The protein is Homeobox domain-containing transcription factor HOB1 of Cryptococcus neoformans var. grubii serotype A (strain H99 / ATCC 208821 / CBS 10515 / FGSC 9487) (Filobasidiella neoformans var. grubii).